A 274-amino-acid polypeptide reads, in one-letter code: MVPDLIRNVVGIVGNVISFGLFLSPVPTFWRIIKNKDVRDFKADQYLATLLNCMLWVFYGLPIVHPNSILVVTINGIGLVIEAVYLTIFFLFSDKKNKKKMGVVLATEALFMAAVALGVLLDAHTHQRRSLIVGILCVIFGTIMYSSPLTIMSQVVKTKSVEYMPLLLSVVSFLNGLCWTSYALIRFDIFITIPNGLGVLFALMQLILYAIYYRTTPKKPSTTGPHPRSRIRTSSYQPSPPSPRAPASSPLSARTTTSMAAMSPSISRLSHKLA.

At 1-8 the chain is on the extracellular side; the sequence is MVPDLIRN. A helical membrane pass occupies residues 9–29; that stretch reads VVGIVGNVISFGLFLSPVPTF. In terms of domain architecture, MtN3/slv 1 spans 9–96; that stretch reads VVGIVGNVIS…TIFFLFSDKK (88 aa). Over 30 to 45 the chain is Cytoplasmic; it reads WRIIKNKDVRDFKADQ. The helical transmembrane segment at 46 to 66 threads the bilayer; sequence YLATLLNCMLWVFYGLPIVHP. Topologically, residues 67-68 are extracellular; sequence NS. Residues 69-89 form a helical membrane-spanning segment; it reads ILVVTINGIGLVIEAVYLTIF. Residues 90–100 lie on the Cytoplasmic side of the membrane; the sequence is FLFSDKKNKKK. The chain crosses the membrane as a helical span at residues 101–121; that stretch reads MGVVLATEALFMAAVALGVLL. At 122–130 the chain is on the extracellular side; it reads DAHTHQRRS. A helical membrane pass occupies residues 131 to 151; that stretch reads LIVGILCVIFGTIMYSSPLTI. The 83-residue stretch at 132–214 folds into the MtN3/slv 2 domain; that stretch reads IVGILCVIFG…QLILYAIYYR (83 aa). Topologically, residues 152–164 are cytoplasmic; the sequence is MSQVVKTKSVEYM. The chain crosses the membrane as a helical span at residues 165-185; sequence PLLLSVVSFLNGLCWTSYALI. At 186–188 the chain is on the extracellular side; sequence RFD. The helical transmembrane segment at 189–209 threads the bilayer; that stretch reads IFITIPNGLGVLFALMQLILY. Residues 210 to 274 are Cytoplasmic-facing; it reads AIYYRTTPKK…SISRLSHKLA (65 aa). The interval 218–274 is disordered; the sequence is KKPSTTGPHPRSRIRTSSYQPSPPSPRAPASSPLSARTTTSMAAMSPSISRLSHKLA. Positions 245–258 are enriched in low complexity; the sequence is APASSPLSARTTTS.

It belongs to the SWEET sugar transporter family. Forms homooligomers and/or heterooligomers.

Its subcellular location is the cell membrane. In terms of biological role, mediates both low-affinity uptake and efflux of sugar across the plasma membrane. The chain is Putative bidirectional sugar transporter SWEET7d (SWEET7D) from Oryza sativa subsp. japonica (Rice).